The primary structure comprises 246 residues: Hydroxyacylglutathione hydrolase (246 aa).

7 residues coordinate Zn(2+): His58, His60, Asp62, His63, His117, Asp137, and His175.

The protein belongs to the metallo-beta-lactamase superfamily. Glyoxalase II family. As to quaternary structure, monomer. The cofactor is Zn(2+).

It carries out the reaction an S-(2-hydroxyacyl)glutathione + H2O = a 2-hydroxy carboxylate + glutathione + H(+). It functions in the pathway secondary metabolite metabolism; methylglyoxal degradation; (R)-lactate from methylglyoxal: step 2/2. Thiolesterase that catalyzes the hydrolysis of S-D-lactoyl-glutathione to form glutathione and D-lactic acid. The polypeptide is Hydroxyacylglutathione hydrolase (Prochlorococcus marinus (strain MIT 9301)).